The following is a 179-amino-acid chain: Large ribosomal subunit protein uL5 (179 aa).

It belongs to the universal ribosomal protein uL5 family. In terms of assembly, part of the 50S ribosomal subunit; part of the 5S rRNA/L5/L18/L25 subcomplex. Contacts the 5S rRNA and the P site tRNA. Forms a bridge to the 30S subunit in the 70S ribosome.

Its function is as follows. This is one of the proteins that bind and probably mediate the attachment of the 5S RNA into the large ribosomal subunit, where it forms part of the central protuberance. In the 70S ribosome it contacts protein S13 of the 30S subunit (bridge B1b), connecting the 2 subunits; this bridge is implicated in subunit movement. Contacts the P site tRNA; the 5S rRNA and some of its associated proteins might help stabilize positioning of ribosome-bound tRNAs. This Anaplasma marginale (strain Florida) protein is Large ribosomal subunit protein uL5.